Consider the following 212-residue polypeptide: Mediator of RNA polymerase II transcription subunit 20 (212 aa).

Belongs to the Mediator complex subunit 20 family. In terms of assembly, component of the Mediator complex, which is composed of MED1, MED4, MED6, MED7, MED8, MED9, MED10, MED11, MED12, MED13, MED13L, MED14, MED15, MED16, MED17, MED18, MED19, MED20, MED21, MED22, MED23, MED24, MED25, MED26, MED27, MED29, MED30, MED31, CCNC, CDK8 and CDC2L6/CDK11. The MED12, MED13, CCNC and CDK8 subunits form a distinct module termed the CDK8 module. Mediator containing the CDK8 module is less active than Mediator lacking this module in supporting transcriptional activation. Individual preparations of the Mediator complex lacking one or more distinct subunits have been variously termed ARC, CRSP, DRIP, PC2, SMCC and TRAP. Interacts with PPARG.

It is found in the nucleus. Component of the Mediator complex, a coactivator involved in the regulated transcription of nearly all RNA polymerase II-dependent genes. Mediator functions as a bridge to convey information from gene-specific regulatory proteins to the basal RNA polymerase II transcription machinery. Mediator is recruited to promoters by direct interactions with regulatory proteins and serves as a scaffold for the assembly of a functional preinitiation complex with RNA polymerase II and the general transcription factors. The sequence is that of Mediator of RNA polymerase II transcription subunit 20 (Med20) from Rattus norvegicus (Rat).